A 402-amino-acid chain; its full sequence is APO protein 3, mitochondrial (402 aa).

Residues 1-13 (MQRRKLVEISIFV) constitute a mitochondrion transit peptide. The disordered stretch occupies residues 37–59 (NDEDPLYADVPKPPKDKSERKPY). Over residues 48–58 (KPPKDKSERKP) the composition is skewed to basic and acidic residues. 2 consecutive APO domains span residues 127-213 (RCRL…DLEK) and 294-380 (TCGY…PVPD).

Belongs to the APO family.

Its subcellular location is the mitochondrion. Functionally, may be involved in the stable assembly of several 4Fe-4S cluster-containing complexes of mitochondria. This Arabidopsis thaliana (Mouse-ear cress) protein is APO protein 3, mitochondrial (APO3).